A 41-amino-acid polypeptide reads, in one-letter code: U3-theraphotoxin-Hs1a (41 aa).

Cystine bridges form between Cys2–Cys16, Cys9–Cys37, and Cys17–Cys40.

The protein belongs to the neurotoxin 14 (magi-1) family. 01 (HNTX-16) subfamily. As to expression, expressed by the venom gland.

Its subcellular location is the secreted. Functionally, intracerebroventricular injection paralyzes mice. Has no effect on voltage-gated sodium currents. This chain is U3-theraphotoxin-Hs1a, found in Cyriopagopus schmidti (Chinese bird spider).